Here is a 341-residue protein sequence, read N- to C-terminus: Ketol-acid reductoisomerase (NADP(+)) (341 aa).

The region spanning 1–182 is the KARI N-terminal Rossmann domain; that stretch reads MTELFYDDDA…GGTRAGVIKT (182 aa). Residues 25–28, serine 51, serine 53, and 83–86 each bind NADP(+); these read YGSQ and DQVQ. Histidine 108 is an active-site residue. Glycine 134 contacts NADP(+). The KARI C-terminal knotted domain occupies 183 to 328; the sequence is TFTEETETDL…RELRKLFSWI (146 aa). Mg(2+) contacts are provided by aspartate 191, glutamate 195, glutamate 227, and glutamate 231. A substrate-binding site is contributed by serine 252.

It belongs to the ketol-acid reductoisomerase family. The cofactor is Mg(2+).

It carries out the reaction (2R)-2,3-dihydroxy-3-methylbutanoate + NADP(+) = (2S)-2-acetolactate + NADPH + H(+). It catalyses the reaction (2R,3R)-2,3-dihydroxy-3-methylpentanoate + NADP(+) = (S)-2-ethyl-2-hydroxy-3-oxobutanoate + NADPH + H(+). The protein operates within amino-acid biosynthesis; L-isoleucine biosynthesis; L-isoleucine from 2-oxobutanoate: step 2/4. It participates in amino-acid biosynthesis; L-valine biosynthesis; L-valine from pyruvate: step 2/4. In terms of biological role, involved in the biosynthesis of branched-chain amino acids (BCAA). Catalyzes an alkyl-migration followed by a ketol-acid reduction of (S)-2-acetolactate (S2AL) to yield (R)-2,3-dihydroxy-isovalerate. In the isomerase reaction, S2AL is rearranged via a Mg-dependent methyl migration to produce 3-hydroxy-3-methyl-2-ketobutyrate (HMKB). In the reductase reaction, this 2-ketoacid undergoes a metal-dependent reduction by NADPH to yield (R)-2,3-dihydroxy-isovalerate. This Renibacterium salmoninarum (strain ATCC 33209 / DSM 20767 / JCM 11484 / NBRC 15589 / NCIMB 2235) protein is Ketol-acid reductoisomerase (NADP(+)).